Consider the following 289-residue polypeptide: ATP synthase gamma chain (289 aa).

The protein belongs to the ATPase gamma chain family. F-type ATPases have 2 components, CF(1) - the catalytic core - and CF(0) - the membrane proton channel. CF(1) has five subunits: alpha(3), beta(3), gamma(1), delta(1), epsilon(1). CF(0) has three main subunits: a, b and c.

Its subcellular location is the cell inner membrane. Produces ATP from ADP in the presence of a proton gradient across the membrane. The gamma chain is believed to be important in regulating ATPase activity and the flow of protons through the CF(0) complex. The polypeptide is ATP synthase gamma chain (Nitrosococcus oceani (strain ATCC 19707 / BCRC 17464 / JCM 30415 / NCIMB 11848 / C-107)).